We begin with the raw amino-acid sequence, 159 residues long: Phosphopantetheine adenylyltransferase (159 aa).

Thr10 provides a ligand contact to substrate. ATP-binding positions include 10-11 (TF) and His18. Residues Lys42, Met74, and Arg88 each coordinate substrate. ATP contacts are provided by residues 89 to 91 (GLR), Glu99, and 124 to 130 (WSFISSS).

The protein belongs to the bacterial CoaD family. Homohexamer. Requires Mg(2+) as cofactor.

The protein localises to the cytoplasm. It catalyses the reaction (R)-4'-phosphopantetheine + ATP + H(+) = 3'-dephospho-CoA + diphosphate. It functions in the pathway cofactor biosynthesis; coenzyme A biosynthesis; CoA from (R)-pantothenate: step 4/5. In terms of biological role, reversibly transfers an adenylyl group from ATP to 4'-phosphopantetheine, yielding dephospho-CoA (dPCoA) and pyrophosphate. In Klebsiella pneumoniae subsp. pneumoniae (strain ATCC 700721 / MGH 78578), this protein is Phosphopantetheine adenylyltransferase.